Consider the following 488-residue polypeptide: Probable indole-3-acetic acid-amido synthetase GH3.6 (488 aa).

Belongs to the IAA-amido conjugating enzyme family. As to expression, expressed in roots and callus.

Its function is as follows. May catalyze the synthesis of indole-3-acetic acid (IAA)-amino acid conjugates, providing a mechanism for the plant to cope with the presence of excess auxin. This is Probable indole-3-acetic acid-amido synthetase GH3.6 (GH3.6) from Oryza sativa subsp. japonica (Rice).